Reading from the N-terminus, the 352-residue chain is UDP-N-acetylglucosamine--N-acetylmuramyl-(pentapeptide) pyrophosphoryl-undecaprenol N-acetylglucosamine transferase (352 aa).

Positions 195 and 287 each coordinate UDP-N-acetyl-alpha-D-glucosamine.

It belongs to the glycosyltransferase 28 family. MurG subfamily.

Its subcellular location is the cell membrane. It catalyses the reaction Mur2Ac(oyl-L-Ala-gamma-D-Glu-L-Lys-D-Ala-D-Ala)-di-trans,octa-cis-undecaprenyl diphosphate + UDP-N-acetyl-alpha-D-glucosamine = beta-D-GlcNAc-(1-&gt;4)-Mur2Ac(oyl-L-Ala-gamma-D-Glu-L-Lys-D-Ala-D-Ala)-di-trans,octa-cis-undecaprenyl diphosphate + UDP + H(+). The protein operates within cell wall biogenesis; peptidoglycan biosynthesis. Its function is as follows. Cell wall formation. Catalyzes the transfer of a GlcNAc subunit on undecaprenyl-pyrophosphoryl-MurNAc-pentapeptide (lipid intermediate I) to form undecaprenyl-pyrophosphoryl-MurNAc-(pentapeptide)GlcNAc (lipid intermediate II). The protein is UDP-N-acetylglucosamine--N-acetylmuramyl-(pentapeptide) pyrophosphoryl-undecaprenol N-acetylglucosamine transferase of Streptococcus pneumoniae (strain 70585).